A 603-amino-acid chain; its full sequence is Baeyer-Villiger monooxygenase (603 aa).

FAD-binding positions include Glu94, 102–105 (TWYW), Asp114, Tyr120, and Val164. 112–114 (HCD) is an NADP(+) binding site. NADP(+) is bound by residues 248 to 254 (TGATGVQ), 271 to 272 (RT), and 386 to 387 (KR).

Belongs to the FAD-binding monooxygenase family. It depends on FAD as a cofactor.

In terms of biological role, catalyzes a Baeyer-Villiger oxidation reaction, i.e. the insertion of an oxygen atom into a carbon-carbon bond adjacent to a carbonyl, which converts ketones to esters or lactones using NADPH and/or NADH as an electron donor. Thus, can convert bicyclo[3.2.0]hept-2-en-6-one into the oxidative lactone products 2-oxabicyclo[3.3.0]oct-6-en-3-one and 3-oxabicyclo[3.3.0]oct-6-en-2-one. Is also able to catalyze the sulfoxidation of methyl phenyl sulfide (thioanisole). This is Baeyer-Villiger monooxygenase from Streptomyces coelicolor (strain ATCC BAA-471 / A3(2) / M145).